A 536-amino-acid chain; its full sequence is Phosphoenolpyruvate carboxykinase (ATP) (536 aa).

Residues Arg-61, Tyr-195, and Lys-201 each coordinate substrate. ATP contacts are provided by residues Lys-201, His-220, and 236–244 (GLSGTGKTT). Lys-201 and His-220 together coordinate Mn(2+). Asp-257 contacts Mn(2+). Glu-285, Arg-323, and Thr-448 together coordinate ATP. Residue Arg-323 coordinates substrate.

It belongs to the phosphoenolpyruvate carboxykinase (ATP) family. Requires Mn(2+) as cofactor.

It localises to the cytoplasm. It carries out the reaction oxaloacetate + ATP = phosphoenolpyruvate + ADP + CO2. It participates in carbohydrate biosynthesis; gluconeogenesis. In terms of biological role, involved in the gluconeogenesis. Catalyzes the conversion of oxaloacetate (OAA) to phosphoenolpyruvate (PEP) through direct phosphoryl transfer between the nucleoside triphosphate and OAA. This is Phosphoenolpyruvate carboxykinase (ATP) from Methylobacterium nodulans (strain LMG 21967 / CNCM I-2342 / ORS 2060).